The primary structure comprises 407 residues: Protein NIS1 (407 aa).

Positions 41–61 (SNSNSNSNTNSNTNSNTNSNS) are enriched in low complexity. The interval 41–64 (SNSNSNSNTNSNTNSNTNSNSDTK) is disordered. Phosphoserine is present on residues Ser260, Ser264, Ser300, and Ser302. A compositionally biased stretch (polar residues) spans 277 to 302 (IKQNSTTPTTRSVYNKNVGRSNTSPS). The interval 277–315 (IKQNSTTPTTRSVYNKNVGRSNTSPSVLYHPKRRGKLNT) is disordered. Positions 306-315 (HPKRRGKLNT) are enriched in basic residues. Residues 391-398 (IIIPDSQD) carry the SUMO-binding motif.

As to quaternary structure, interacts with CBF2, GIS1, NAP1, PRM8, REI1, SHS1 and SMT3.

The protein resides in the bud neck. The protein localises to the cytoplasm. It is found in the cell cortex. May be involved in a mitotic signaling network. Binds sumoylated proteins and may stabilize SUMO chains. This chain is Protein NIS1 (NIS1), found in Saccharomyces cerevisiae (strain ATCC 204508 / S288c) (Baker's yeast).